We begin with the raw amino-acid sequence, 425 residues long: Riboflavin biosynthesis protein RibBA (425 aa).

Residues M1 to K204 form a DHBP synthase region. D-ribulose 5-phosphate contacts are provided by residues R28–E29, D33, R141–T145, and E165. E29 is a binding site for Mg(2+). H144 is a Mg(2+) binding site. The tract at residues H205–L425 is GTP cyclohydrolase II. R259–E263 lines the GTP pocket. C264, C275, and C277 together coordinate Zn(2+). Residues Q280, E303 to R305, and T325 contribute to the GTP site. Catalysis depends on D337, which acts as the Proton acceptor; for GTP cyclohydrolase activity. R339 (nucleophile; for GTP cyclohydrolase activity) is an active-site residue. GTP-binding residues include T360 and K365.

In the N-terminal section; belongs to the DHBP synthase family. It in the C-terminal section; belongs to the GTP cyclohydrolase II family. Mg(2+) is required as a cofactor. The cofactor is Mn(2+). Zn(2+) serves as cofactor.

It carries out the reaction D-ribulose 5-phosphate = (2S)-2-hydroxy-3-oxobutyl phosphate + formate + H(+). The enzyme catalyses GTP + 4 H2O = 2,5-diamino-6-hydroxy-4-(5-phosphoribosylamino)-pyrimidine + formate + 2 phosphate + 3 H(+). It functions in the pathway cofactor biosynthesis; riboflavin biosynthesis; 2-hydroxy-3-oxobutyl phosphate from D-ribulose 5-phosphate: step 1/1. Its pathway is cofactor biosynthesis; riboflavin biosynthesis; 5-amino-6-(D-ribitylamino)uracil from GTP: step 1/4. Catalyzes the conversion of D-ribulose 5-phosphate to formate and 3,4-dihydroxy-2-butanone 4-phosphate. Functionally, catalyzes the conversion of GTP to 2,5-diamino-6-ribosylamino-4(3H)-pyrimidinone 5'-phosphate (DARP), formate and pyrophosphate. The sequence is that of Riboflavin biosynthesis protein RibBA from Mycobacterium marinum (strain ATCC BAA-535 / M).